The sequence spans 149 residues: Arginine repressor (149 aa).

The protein belongs to the ArgR family.

Its subcellular location is the cytoplasm. It functions in the pathway amino-acid biosynthesis; L-arginine biosynthesis [regulation]. Regulates arginine biosynthesis genes. The chain is Arginine repressor from Chlorobaculum parvum (strain DSM 263 / NCIMB 8327) (Chlorobium vibrioforme subsp. thiosulfatophilum).